The following is a 92-amino-acid chain: MTEAAKTETSLRRTLVGRVVSDKMDKTVTVLVENRVKHPLYGKYVLRSKKYHAHDEANQYKEGDKVEIQEGRPLSRTKSWVVSRLVEAARVI.

It belongs to the universal ribosomal protein uS17 family. Part of the 30S ribosomal subunit.

In terms of biological role, one of the primary rRNA binding proteins, it binds specifically to the 5'-end of 16S ribosomal RNA. The sequence is that of Small ribosomal subunit protein uS17 from Cupriavidus pinatubonensis (strain JMP 134 / LMG 1197) (Cupriavidus necator (strain JMP 134)).